Here is a 472-residue protein sequence, read N- to C-terminus: Doublesex- and mab-3-related transcription factor 3 (472 aa).

The segment at residues 29-76 (CARCRNHGVLSWLKGHKRYCRFKDCTCEKCILIIERQRVMAAQVALRR) is a DNA-binding region (DM). Disordered regions lie at residues 89–128 (DSLRALPGPPPPGDAVAAPQPPPASQPSQPQPPRPAAELA) and 155–191 (EERLGDGKSADNTEVFSDKDTDQRSSPDVAKSKGCFT). Pro residues predominate over residues 95-123 (PGPPPPGDAVAAPQPPPASQPSQPQPPRP). Residues 155-179 (EERLGDGKSADNTEVFSDKDTDQRS) show a composition bias toward basic and acidic residues. Residues 249-284 (RPPLEVLKKIFPNQKPTVLELILKGCGGDLVSAVEV) form the DMA domain. The segment at 430-472 (TEDPRISIPDDGCPFVSKQSIYTEDDYDERSDSSDSRTLNTSS) is disordered.

Belongs to the DMRT family. In terms of assembly, may homodimerize. As to expression, expressed in testis.

It localises to the nucleus. Probable transcription factor that plays a role in configuring the spinal circuits controlling stride in vertebrates. Involved in neuronal specification within specific subdivision of spinal cord neurons and in the development of a coordinated locomotor network controlling limb movements. May regulate transcription during sexual development. The polypeptide is Doublesex- and mab-3-related transcription factor 3 (DMRT3) (Homo sapiens (Human)).